Reading from the N-terminus, the 431-residue chain is Adenylosuccinate synthetase (431 aa).

GTP contacts are provided by residues 15–21 (GDEGKGK) and 43–45 (GHT). Asp-16 functions as the Proton acceptor in the catalytic mechanism. Mg(2+) is bound by residues Asp-16 and Gly-43. IMP-binding positions include 16–19 (DEGK), 41–44 (NAGH), Thr-135, Arg-149, Asn-227, Thr-242, and Arg-306. Catalysis depends on His-44, which acts as the Proton donor. 302-308 (VTTGRKR) serves as a coordination point for substrate. GTP contacts are provided by residues Arg-308, 334–336 (KLD), and 416–418 (GVG).

Belongs to the adenylosuccinate synthetase family. Homodimer. Mg(2+) is required as a cofactor.

Its subcellular location is the cytoplasm. It carries out the reaction IMP + L-aspartate + GTP = N(6)-(1,2-dicarboxyethyl)-AMP + GDP + phosphate + 2 H(+). It functions in the pathway purine metabolism; AMP biosynthesis via de novo pathway; AMP from IMP: step 1/2. Functionally, plays an important role in the de novo pathway and in the salvage pathway of purine nucleotide biosynthesis. Catalyzes the first committed step in the biosynthesis of AMP from IMP. The chain is Adenylosuccinate synthetase from Monosiga brevicollis (Choanoflagellate).